The sequence spans 456 residues: Trigger factor (456 aa).

In terms of domain architecture, PPIase FKBP-type spans 192–277; it reads GDTVVIDFVG…IHEVKTKEVP (86 aa).

This sequence belongs to the FKBP-type PPIase family. Tig subfamily.

It localises to the cytoplasm. It catalyses the reaction [protein]-peptidylproline (omega=180) = [protein]-peptidylproline (omega=0). In terms of biological role, involved in protein export. Acts as a chaperone by maintaining the newly synthesized protein in an open conformation. Functions as a peptidyl-prolyl cis-trans isomerase. In Streptococcus pyogenes serotype M4 (strain MGAS10750), this protein is Trigger factor.